A 79-amino-acid polypeptide reads, in one-letter code: Mycoredoxin 1 (79 aa).

The Glutaredoxin domain maps to 1 to 79 (MSNVTIYATD…EVIAKIEALA (79 aa)).

This sequence belongs to the glutaredoxin family.

The protein localises to the cytoplasm. It carries out the reaction [mycoredoxin]-L-cysteine + arseno-mycothiol + H(+) = [mycoredoxin]-S-mycothiol-L-cysteine + arsenite. Functionally, involved in defense against toxic arsenate. Involved in the mycothiol/myoredoxin redox pathway which uses a mycothioltransferase mechanism; functions as a monothiol mixed disulfide reductase and is recycled by a second mycothiol forming mycothione which in turn is reduced in a NADPH-dependent manner. The sequence is that of Mycoredoxin 1 (mrx1) from Corynebacterium glutamicum (strain ATCC 13032 / K051).